Consider the following 671-residue polypeptide: UvrABC system protein B (671 aa).

Residues 26-183 form the Helicase ATP-binding domain; it reads EGLENGLAHQ…RRLSELQYSR (158 aa). 39–46 contacts ATP; sequence GVTGSGKT. The short motif at 92-115 is the Beta-hairpin element; it reads YYDYYQPEAYVPSSDTFIEKDASV. The region spanning 431 to 597 is the Helicase C-terminal domain; that stretch reads QVDDLLSEIR…GLNKKIGDIL (167 aa). One can recognise a UVR domain in the interval 631–666; the sequence is DQKIRELEAKMYTYAQNLEFEQAAELRDQVHQLRQQ.

This sequence belongs to the UvrB family. Forms a heterotetramer with UvrA during the search for lesions. Interacts with UvrC in an incision complex.

The protein localises to the cytoplasm. In terms of biological role, the UvrABC repair system catalyzes the recognition and processing of DNA lesions. A damage recognition complex composed of 2 UvrA and 2 UvrB subunits scans DNA for abnormalities. Upon binding of the UvrA(2)B(2) complex to a putative damaged site, the DNA wraps around one UvrB monomer. DNA wrap is dependent on ATP binding by UvrB and probably causes local melting of the DNA helix, facilitating insertion of UvrB beta-hairpin between the DNA strands. Then UvrB probes one DNA strand for the presence of a lesion. If a lesion is found the UvrA subunits dissociate and the UvrB-DNA preincision complex is formed. This complex is subsequently bound by UvrC and the second UvrB is released. If no lesion is found, the DNA wraps around the other UvrB subunit that will check the other stand for damage. This Yersinia pseudotuberculosis serotype IB (strain PB1/+) protein is UvrABC system protein B.